A 402-amino-acid chain; its full sequence is 1-deoxy-D-xylulose 5-phosphate reductoisomerase (402 aa).

Thr10, Gly11, Ser12, Ile13, Gly36, Asn38, and Asn124 together coordinate NADPH. Residue Lys125 participates in 1-deoxy-D-xylulose 5-phosphate binding. Glu126 is an NADPH binding site. Residue Asp150 participates in Mn(2+) binding. 4 residues coordinate 1-deoxy-D-xylulose 5-phosphate: Ser151, Glu152, Ser186, and His209. Position 152 (Glu152) interacts with Mn(2+). NADPH is bound at residue Gly215. Residues Ser222, Asn227, Lys228, and Glu231 each contribute to the 1-deoxy-D-xylulose 5-phosphate site. Residue Glu231 coordinates Mn(2+).

The protein belongs to the DXR family. Mg(2+) serves as cofactor. Mn(2+) is required as a cofactor.

The enzyme catalyses 2-C-methyl-D-erythritol 4-phosphate + NADP(+) = 1-deoxy-D-xylulose 5-phosphate + NADPH + H(+). It participates in isoprenoid biosynthesis; isopentenyl diphosphate biosynthesis via DXP pathway; isopentenyl diphosphate from 1-deoxy-D-xylulose 5-phosphate: step 1/6. Its function is as follows. Catalyzes the NADPH-dependent rearrangement and reduction of 1-deoxy-D-xylulose-5-phosphate (DXP) to 2-C-methyl-D-erythritol 4-phosphate (MEP). This chain is 1-deoxy-D-xylulose 5-phosphate reductoisomerase, found in Vibrio cholerae serotype O1 (strain ATCC 39541 / Classical Ogawa 395 / O395).